Reading from the N-terminus, the 479-residue chain is Odorant receptor coreceptor (479 aa).

The Cytoplasmic segment spans residues 1-43 (MMKMKQQGLVADLLPNIRVMKFFGHFVFNYYDDNSSKYLHKIF). Residues 44-64 (CCVNLFLLLLQFALCAVNLII) form a helical membrane-spanning segment. At 65-73 (ESADVDDLT) the chain is on the extracellular side. A helical membrane pass occupies residues 74–94 (ANTITLLFFTHSIVKIIYFAV). The Cytoplasmic segment spans residues 95 to 133 (RSKYFYRTWAIWNNPNSHPLFAESNARYHAIALKKMRLL). The helical transmembrane segment at 134–154 (LFLVGATTVLSAIAWTVLTFF) threads the bilayer. At 155-190 (EHPIRKLVDPVTNETTIIELPQLLLRSYYPFDASKG) the chain is on the extracellular side. A glycan (N-linked (GlcNAc...) asparagine) is linked at asparagine 167. Residues 191-211 (IMHVIVLIYQFYWVLFMLIDA) traverse the membrane as a helical segment. Residues 212-350 (NSLDVLFCSW…IVRLVTAVGD (139 aa)) are Cytoplasmic-facing. Positions 261-280 (SAEHLRESENQPPPPVPPQG) are disordered. The helical transmembrane segment at 351 to 371 (AYGFALLLHMLTTTITLTLLA) threads the bilayer. The Extracellular segment spans residues 372-383 (YQATKVNGVNVY). Residues 384–404 (AASTIGYIIYTFGQVFLFCIF) form a helical membrane-spanning segment. Over 405 to 455 (GNRLIEESTSVMEAAYSCHWYDGSEEAKTFVQIVCQQCQKAMSISGAKFFT) the chain is Cytoplasmic. A helical transmembrane segment spans residues 456–476 (VSLDLFASVLGAVVTYFMVLV). Over 477-479 (QLK) the chain is Extracellular.

Belongs to the insect chemoreceptor superfamily. Heteromeric odorant receptor channel (TC 1.A.69) family. Orco subfamily. In terms of assembly, heterodimer with conventional odorant receptors (ORs).

The protein resides in the cell membrane. Odorant coreceptor which complexes with conventional odorant receptors (ORs) to form odorant-sensing units, providing sensitive and prolonged odorant signaling and calcium permeability. Obligate coreceptor of all odorant receptors. Orco is a universal and integral part of the functional odorant receptor, involved in the dendritic localization of other olfactory receptors. Can form functional ion channels in the absence of an odor-binding odorant receptor. Plays a central role in the perception of olfactory stimuli in ants and is essential for ant social organization. Required for pheromone sensing and mating behavior. Also required for the development and maintenance of odorant receptor neurons (ORNs) and of antennal lobe glomeruli. This is Odorant receptor coreceptor from Harpegnathos saltator (Jerdon's jumping ant).